The sequence spans 329 residues: DNA-directed RNA polymerase subunit alpha (329 aa).

The segment at 1–234 (MQGSVTEFLK…EQLDAFVELR (234 aa)) is alpha N-terminal domain (alpha-NTD). Residues 248 to 329 (FDPILLRPVD…WPPASLADDL (82 aa)) form an alpha C-terminal domain (alpha-CTD) region.

It belongs to the RNA polymerase alpha chain family. As to quaternary structure, homodimer. The RNAP catalytic core consists of 2 alpha, 1 beta, 1 beta' and 1 omega subunit. When a sigma factor is associated with the core the holoenzyme is formed, which can initiate transcription.

The catalysed reaction is RNA(n) + a ribonucleoside 5'-triphosphate = RNA(n+1) + diphosphate. DNA-dependent RNA polymerase catalyzes the transcription of DNA into RNA using the four ribonucleoside triphosphates as substrates. This is DNA-directed RNA polymerase subunit alpha from Shewanella sp. (strain ANA-3).